A 287-amino-acid polypeptide reads, in one-letter code: 33 kDa chaperonin (287 aa).

2 disulfide bridges follow: Cys231–Cys233 and Cys264–Cys267.

This sequence belongs to the HSP33 family. Under oxidizing conditions two disulfide bonds are formed involving the reactive cysteines. Under reducing conditions zinc is bound to the reactive cysteines and the protein is inactive.

It localises to the cytoplasm. Its function is as follows. Redox regulated molecular chaperone. Protects both thermally unfolding and oxidatively damaged proteins from irreversible aggregation. Plays an important role in the bacterial defense system toward oxidative stress. The protein is 33 kDa chaperonin of Thermosipho melanesiensis (strain DSM 12029 / CIP 104789 / BI429).